The following is a 188-amino-acid chain: Probable nicotinate-nucleotide adenylyltransferase (188 aa).

The protein belongs to the NadD family.

The catalysed reaction is nicotinate beta-D-ribonucleotide + ATP + H(+) = deamido-NAD(+) + diphosphate. It functions in the pathway cofactor biosynthesis; NAD(+) biosynthesis; deamido-NAD(+) from nicotinate D-ribonucleotide: step 1/1. In terms of biological role, catalyzes the reversible adenylation of nicotinate mononucleotide (NaMN) to nicotinic acid adenine dinucleotide (NaAD). This is Probable nicotinate-nucleotide adenylyltransferase from Salinispora tropica (strain ATCC BAA-916 / DSM 44818 / JCM 13857 / NBRC 105044 / CNB-440).